A 411-amino-acid polypeptide reads, in one-letter code: Glutamate dehydrogenase 2, mitochondrial (411 aa).

The transit peptide at 1 to 18 (MNALAATSRNFRQAARLL) directs the protein to the mitochondrion. The active site involves Lys102.

It belongs to the Glu/Leu/Phe/Val dehydrogenases family. In terms of tissue distribution, expressed in roots. Expressed ubiquitously in various tissues.

The protein resides in the mitochondrion. It catalyses the reaction L-glutamate + NAD(+) + H2O = 2-oxoglutarate + NH4(+) + NADH + H(+). It carries out the reaction L-glutamate + NADP(+) + H2O = 2-oxoglutarate + NH4(+) + NADPH + H(+). The sequence is that of Glutamate dehydrogenase 2, mitochondrial (GDH2) from Oryza sativa subsp. japonica (Rice).